The chain runs to 215 residues: Cytochrome c biogenesis ATP-binding export protein CcmA (215 aa).

Positions 3–215 constitute an ABC transporter domain; that stretch reads LEAENLAGER…MAAFSVEDIA (213 aa). 35–42 lines the ATP pocket; the sequence is GPNGSGKS.

The protein belongs to the ABC transporter superfamily. CcmA exporter (TC 3.A.1.107) family. As to quaternary structure, the complex is composed of two ATP-binding proteins (CcmA) and two transmembrane proteins (CcmB).

The protein resides in the cell inner membrane. The enzyme catalyses heme b(in) + ATP + H2O = heme b(out) + ADP + phosphate + H(+). Part of the ABC transporter complex CcmAB involved in the biogenesis of c-type cytochromes; once thought to export heme, this seems not to be the case, but its exact role is uncertain. Responsible for energy coupling to the transport system. This chain is Cytochrome c biogenesis ATP-binding export protein CcmA, found in Brucella abortus (strain 2308).